A 646-amino-acid polypeptide reads, in one-letter code: Acetyl-coenzyme A synthetase (646 aa).

CoA-binding positions include 189–192 (RGPK), T307, and N331. ATP-binding positions include 383 to 385 (GEP), 407 to 412 (DTWWQT), D496, and R511. S519 serves as a coordination point for CoA. Residue R522 participates in ATP binding. Mg(2+)-binding residues include V533, H535, and V538. Position 580 (R580) interacts with CoA. K605 carries the post-translational modification N6-acetyllysine.

The protein belongs to the ATP-dependent AMP-binding enzyme family. It depends on Mg(2+) as a cofactor. In terms of processing, acetylated. Deacetylation by the SIR2-homolog deacetylase activates the enzyme.

The catalysed reaction is acetate + ATP + CoA = acetyl-CoA + AMP + diphosphate. Catalyzes the conversion of acetate into acetyl-CoA (AcCoA), an essential intermediate at the junction of anabolic and catabolic pathways. AcsA undergoes a two-step reaction. In the first half reaction, AcsA combines acetate with ATP to form acetyl-adenylate (AcAMP) intermediate. In the second half reaction, it can then transfer the acetyl group from AcAMP to the sulfhydryl group of CoA, forming the product AcCoA. This chain is Acetyl-coenzyme A synthetase, found in Desulfatibacillum aliphaticivorans.